The sequence spans 205 residues: Ephrin-A1 (205 aa).

An N-terminal signal peptide occupies residues Met-1–Ala-17. The 134-residue stretch at Ala-18–Ile-151 folds into the Ephrin RBD domain. The N-linked (GlcNAc...) asparagine glycan is linked to Asn-26. Intrachain disulfides connect Cys-51/Cys-92 and Cys-80/Cys-140. Ser-182 carries GPI-anchor amidated serine lipidation. The propeptide at Ala-183–Gln-205 is removed in mature form.

It belongs to the ephrin family. In terms of assembly, monomer. Homodimer. Forms heterodimers with EPHA2. Binds to the receptor tyrosine kinases EPHA2, EPHA3, EPHA4, EPHA5, EPHA6 and EPHA7. Also binds with low affinity to EPHA1. Post-translationally, undergoes proteolysis by a metalloprotease to give rise to a soluble monomeric form. N-Glycosylation is required for binding to EPHA2 receptor and inducing its internalization.

It localises to the cell membrane. The protein resides in the secreted. In terms of biological role, cell surface GPI-bound ligand for Eph receptors, a family of receptor tyrosine kinases which are crucial for migration, repulsion and adhesion during neuronal, vascular and epithelial development. Binds promiscuously Eph receptors residing on adjacent cells, leading to contact-dependent bidirectional signaling into neighboring cells. Plays an important role in angiogenesis and tumor neovascularization. The recruitment of VAV2, VAV3 and PI3-kinase p85 subunit by phosphorylated EPHA2 is critical for EFNA1-induced RAC1 GTPase activation and vascular endothelial cell migration and assembly. Exerts anti-oncogenic effects in tumor cells through activation and down-regulation of EPHA2. Activates EPHA2 by inducing tyrosine phosphorylation which leads to its internalization and degradation. Acts as a negative regulator in the tumorigenesis of gliomas by down-regulating EPHA2 and FAK. Can evoke collapse of embryonic neuronal growth cone and regulates dendritic spine morphogenesis. The protein is Ephrin-A1 (Efna1) of Rattus norvegicus (Rat).